A 212-amino-acid chain; its full sequence is MKILVTAFDPFGGEKINPALEAVKQLENTIGEHTISKLEIPTVFHESKDVIDKELANGNYDVVLSIGQAGGRYDLTPERVGINIDDARIPDNKGNQPIDVAIQEDGAPAYFSNLPVKTMTEAIKAAGVPASLSNTAGTFVCNHVLYQLGYLADKSYPGLLFGFIHVPFIPEQVTDKPEKPSMSIETIAKGLTAAIKAISKEDDAKVALGETH.

Active-site residues include Glu-78, Cys-141, and His-165.

The protein belongs to the peptidase C15 family. Homotetramer.

It localises to the cytoplasm. It carries out the reaction Release of an N-terminal pyroglutamyl group from a polypeptide, the second amino acid generally not being Pro.. Its function is as follows. Removes 5-oxoproline from various penultimate amino acid residues except L-proline. The sequence is that of Pyrrolidone-carboxylate peptidase from Staphylococcus haemolyticus (strain JCSC1435).